We begin with the raw amino-acid sequence, 248 residues long: Trypsin I-P38 (248 aa).

The N-terminal stretch at 1 to 15 (MKFLVLVAFLGVAVA) is a signal peptide. A propeptide spans 16–25 (FPISDEDDDK) (activation peptide). The Peptidase S1 domain maps to 26 to 246 (IVGGYSCARS…YVSWIKTTMS (221 aa)). Disulfide bonds link cysteine 32–cysteine 162, cysteine 50–cysteine 66, cysteine 134–cysteine 235, cysteine 141–cysteine 208, cysteine 173–cysteine 187, and cysteine 198–cysteine 222. Catalysis depends on histidine 65, which acts as the Charge relay system. Positions 77, 79, and 87 each coordinate Ca(2+). The active-site Charge relay system is aspartate 109. Serine 202 functions as the Charge relay system in the catalytic mechanism.

The protein belongs to the peptidase S1 family. Ca(2+) is required as a cofactor. In terms of tissue distribution, high levels are seen in the pancreas while lower levels are found in the liver, spleen and thymus.

It is found in the secreted. The protein localises to the extracellular space. The enzyme catalyses Preferential cleavage: Arg-|-Xaa, Lys-|-Xaa.. In Gallus gallus (Chicken), this protein is Trypsin I-P38.